The chain runs to 457 residues: Siroheme synthase (457 aa).

The tract at residues 1 to 204 is precorrin-2 dehydrogenase /sirohydrochlorin ferrochelatase; the sequence is MDHLPIFCQL…ADEKAVNATT (204 aa). NAD(+) contacts are provided by residues 22-23 and 43-44; these read DV and LT. At Ser128 the chain carries Phosphoserine. The tract at residues 216 to 457 is uroporphyrinogen-III C-methyltransferase; sequence GEVVLVGAGP…RDKLNWFSNY (242 aa). Residue Pro225 participates in S-adenosyl-L-methionine binding. Asp248 acts as the Proton acceptor in catalysis. The active-site Proton donor is Lys270. S-adenosyl-L-methionine-binding positions include 301–303, Ile306, 331–332, Met382, and Gly411; these read GGD and TA.

It in the N-terminal section; belongs to the precorrin-2 dehydrogenase / sirohydrochlorin ferrochelatase family. The protein in the C-terminal section; belongs to the precorrin methyltransferase family.

The catalysed reaction is uroporphyrinogen III + 2 S-adenosyl-L-methionine = precorrin-2 + 2 S-adenosyl-L-homocysteine + H(+). It carries out the reaction precorrin-2 + NAD(+) = sirohydrochlorin + NADH + 2 H(+). It catalyses the reaction siroheme + 2 H(+) = sirohydrochlorin + Fe(2+). It participates in cofactor biosynthesis; adenosylcobalamin biosynthesis; precorrin-2 from uroporphyrinogen III: step 1/1. It functions in the pathway cofactor biosynthesis; adenosylcobalamin biosynthesis; sirohydrochlorin from precorrin-2: step 1/1. Its pathway is porphyrin-containing compound metabolism; siroheme biosynthesis; precorrin-2 from uroporphyrinogen III: step 1/1. The protein operates within porphyrin-containing compound metabolism; siroheme biosynthesis; siroheme from sirohydrochlorin: step 1/1. It participates in porphyrin-containing compound metabolism; siroheme biosynthesis; sirohydrochlorin from precorrin-2: step 1/1. In terms of biological role, multifunctional enzyme that catalyzes the SAM-dependent methylations of uroporphyrinogen III at position C-2 and C-7 to form precorrin-2 via precorrin-1. Then it catalyzes the NAD-dependent ring dehydrogenation of precorrin-2 to yield sirohydrochlorin. Finally, it catalyzes the ferrochelation of sirohydrochlorin to yield siroheme. This is Siroheme synthase from Salmonella gallinarum (strain 287/91 / NCTC 13346).